The primary structure comprises 359 residues: Probable NAD(P)H nitroreductase PigM (359 aa).

This sequence belongs to the nitroreductase family. FMN is required as a cofactor.

The protein operates within antibiotic biosynthesis; prodigiosin biosynthesis. Involved in the biosynthesis of 4-methoxy-2,2'-bipyrrole-5-carbaldehyde (MBC), one of the terminal products involved in the biosynthesis of the red antibiotic prodigiosin (Pig). Catalyzes the oxidation of the hydroxy group of 4-hydroxy-2,2'-bipyrrole-5-methanol (HBM) to yield 4-methoxy-2,2'-bipyrrole-5-carbaldehyde (MBC). The sequence is that of Probable NAD(P)H nitroreductase PigM from Serratia sp. (strain ATCC 39006) (Prodigiosinella confusarubida).